A 102-amino-acid chain; its full sequence is MQSQKIRIRLKAYDHKLLDLSVNEIVDTAKRTGARVAGPIPLPTIINKYCVLRGPHVDKKSREQFEMRTHKRLLDIVEPTQQTVDALMKLDLSAGVDVEIKL.

The protein belongs to the universal ribosomal protein uS10 family. Part of the 30S ribosomal subunit.

Functionally, involved in the binding of tRNA to the ribosomes. This is Small ribosomal subunit protein uS10 from Syntrophotalea carbinolica (strain DSM 2380 / NBRC 103641 / GraBd1) (Pelobacter carbinolicus).